The following is a 1165-amino-acid chain: DNA-directed RNA polymerase subunit beta (1165 aa).

This sequence belongs to the RNA polymerase beta chain family. As to quaternary structure, the RNAP catalytic core consists of 2 alpha, 1 beta, 1 beta' and 1 omega subunit. When a sigma factor is associated with the core the holoenzyme is formed, which can initiate transcription.

It catalyses the reaction RNA(n) + a ribonucleoside 5'-triphosphate = RNA(n+1) + diphosphate. DNA-dependent RNA polymerase catalyzes the transcription of DNA into RNA using the four ribonucleoside triphosphates as substrates. The protein is DNA-directed RNA polymerase subunit beta of Leifsonia xyli subsp. xyli (strain CTCB07).